Reading from the N-terminus, the 413-residue chain is Serine hydroxymethyltransferase (413 aa).

(6S)-5,6,7,8-tetrahydrofolate is bound by residues Leu119 and 123-125 (GHL). Position 228 is an N6-(pyridoxal phosphate)lysine (Lys228). Position 351–353 (351–353 (SPF)) interacts with (6S)-5,6,7,8-tetrahydrofolate.

The protein belongs to the SHMT family. In terms of assembly, homodimer. Pyridoxal 5'-phosphate serves as cofactor.

Its subcellular location is the cytoplasm. It carries out the reaction (6R)-5,10-methylene-5,6,7,8-tetrahydrofolate + glycine + H2O = (6S)-5,6,7,8-tetrahydrofolate + L-serine. It participates in one-carbon metabolism; tetrahydrofolate interconversion. The protein operates within amino-acid biosynthesis; glycine biosynthesis; glycine from L-serine: step 1/1. In terms of biological role, catalyzes the reversible interconversion of serine and glycine with tetrahydrofolate (THF) serving as the one-carbon carrier. This reaction serves as the major source of one-carbon groups required for the biosynthesis of purines, thymidylate, methionine, and other important biomolecules. Also exhibits THF-independent aldolase activity toward beta-hydroxyamino acids, producing glycine and aldehydes, via a retro-aldol mechanism. The protein is Serine hydroxymethyltransferase of Clostridium botulinum (strain ATCC 19397 / Type A).